Consider the following 3206-residue polypeptide: Highly reducing polyketide synthase ltbA (3206 aa).

One can recognise a Ketosynthase family 3 (KS3) domain in the interval 5-434 (PAPIAIIGVG…GTNCHVILEA (430 aa)). Residues Cys-179, His-314, and His-354 each act as for beta-ketoacyl synthase activity in the active site. Residues 441-463 (PTGTNGIKTNGTRINGIKTNGAD) are compositionally biased toward polar residues. The tract at residues 441–472 (PTGTNGIKTNGTRINGIKTNGADTNERESMKN) is disordered. Residues 575–890 (VFSGQGAQWH…EYLSALQRNT (316 aa)) form a malonyl-CoA:ACP transacylase (MAT) domain region. Residues 958–1098 (HDLLGLFDPA…GEITVEYETD (141 aa)) are N-terminal hotdog fold. The interval 958–1278 (HDLLGLFDPA…LLVNLRAIGE (321 aa)) is dehydratase (DH) domain. In terms of domain architecture, PKS/mFAS DH spans 958-1284 (HDLLGLFDPA…AIGETREDED (327 aa)). The active-site Proton acceptor; for dehydratase activity is His-990. Residues 1128 to 1284 (DTDMTKSEFY…AIGETREDED (157 aa)) form a C-terminal hotdog fold region. Asp-1193 (proton donor; for dehydratase activity) is an active-site residue. The tract at residues 1450–1640 (ESGILVGPYE…LARNGFGGIH (191 aa)) is methyltransferase (CMet) domain. The segment at 1871-2185 (LLSSLRFVDD…RKHTGKVVLQ (315 aa)) is enoyl reductase (ER) domain. The segment at 2208–2395 (GTYVAAGGLG…SVDAHGALKE (188 aa)) is ketoreductase (KR) domain. The region spanning 2499–2577 (EEAEQLIRDA…ALAATVASRS (79 aa)) is the Carrier domain. An O-(pantetheine 4'-phosphoryl)serine modification is found at Ser-2537. The segment at 2584-2611 (IRHSSRLQEATTQAENKDAPKNEKEGPS) is disordered. The segment covering 2598-2610 (ENKDAPKNEKEGP) has biased composition (basic and acidic residues). Residues 2994-3206 (HLIPSFGKAV…IKTIIQAGQE (213 aa)) form a carnitine O-acyltransferase (cAT) domain region.

Requires pantetheine 4'-phosphate as cofactor.

Its pathway is secondary metabolite biosynthesis. Its function is as follows. Highly reducing polyketide synthase; part of the gene cluster that mediates the biosynthesis of luteodienoside A, a glycosylated polyketide consisting of an unusual 1-O-beta-D-glucopyranosyl-myo-inositol (glucinol) ester of 3-hydroxy-2,2,4-trimethylocta-4,6-dienoic acid. LtbA produces the trimethylated polyketide chain from acetyl-CoA, malonyl-CoA and S-adenosylmethionine (SAM). The ltbA carnitine O-acyltransferase (cAT) domain then uses glucinol produced by the glycosyltransferase ltbB as an offloading substrate to release luteodienoside A. Furthermore, the PKS C-methyltransferase (CMeT) domain is capable of catalysing gem-dimethylation of the 3-hydroxy-2,2,4-trimethylocta-4,6-dienoic acid intermediate, without requiring reversible product release and recapture by the cAT domain. Since ltbA and ltbB are sufficient for the biosynthesis of luteodienoside A, the functions of the methyltransferase ltbC and the FAD-binding monooxygenase ltbD within the pathway remain obscur. In Aspergillus luteorubrus, this protein is Highly reducing polyketide synthase ltbA.